The chain runs to 556 residues: Sesquiterpene synthase 2 (556 aa).

Mg(2+) is bound by residues D309, D313, D453, and E461. Residues D309–D313 carry the DDXXD motif motif.

The protein belongs to the terpene synthase family. Tpsa subfamily. Requires Mg(2+) as cofactor. Mn(2+) serves as cofactor. As to expression, mostly expressed in roots and mature leaflets and, to a lower extent, in rachis and developing leaflets.

The catalysed reaction is (2E,6E)-farnesyl diphosphate = alpha-humulene + diphosphate. The enzyme catalyses (2E,6E)-farnesyl diphosphate = alpha-selinene + diphosphate. It carries out the reaction (2E,6E)-farnesyl diphosphate = delta-cadinene + diphosphate. It catalyses the reaction (2E,6E)-farnesyl diphosphate = (1S,2S,4R)-beta-elemene + diphosphate. Its pathway is secondary metabolite biosynthesis; terpenoid biosynthesis. Functionally, sesquiterpene synthase involved in the biosynthesis of volatile compounds known for their medicinal efficacy for treating enteritis, dysentery, itch and some cancers. Mediates the conversion of (2E,6E)-farnesyl diphosphate (FPP) into beta-elemene, alpha-humulene, delta-cadinene and alpha-selinene. In Toona sinensis (Chinese mahogany), this protein is Sesquiterpene synthase 2.